We begin with the raw amino-acid sequence, 218 residues long: Imidazole glycerol phosphate synthase subunit HisH (218 aa).

The Glutamine amidotransferase type-1 domain maps to 5–213; sequence RLAVIDYEAG…VEFVARCSPL (209 aa). Cysteine 83 serves as the catalytic Nucleophile. Residues histidine 188 and glutamate 190 contribute to the active site.

Heterodimer of HisH and HisF.

The protein localises to the cytoplasm. It catalyses the reaction 5-[(5-phospho-1-deoxy-D-ribulos-1-ylimino)methylamino]-1-(5-phospho-beta-D-ribosyl)imidazole-4-carboxamide + L-glutamine = D-erythro-1-(imidazol-4-yl)glycerol 3-phosphate + 5-amino-1-(5-phospho-beta-D-ribosyl)imidazole-4-carboxamide + L-glutamate + H(+). The enzyme catalyses L-glutamine + H2O = L-glutamate + NH4(+). It participates in amino-acid biosynthesis; L-histidine biosynthesis; L-histidine from 5-phospho-alpha-D-ribose 1-diphosphate: step 5/9. Its function is as follows. IGPS catalyzes the conversion of PRFAR and glutamine to IGP, AICAR and glutamate. The HisH subunit catalyzes the hydrolysis of glutamine to glutamate and ammonia as part of the synthesis of IGP and AICAR. The resulting ammonia molecule is channeled to the active site of HisF. The polypeptide is Imidazole glycerol phosphate synthase subunit HisH (Synechococcus sp. (strain JA-2-3B'a(2-13)) (Cyanobacteria bacterium Yellowstone B-Prime)).